Reading from the N-terminus, the 853-residue chain is Penicillin-binding protein 1A (853 aa).

Over 1 to 6 (MRIAKL) the chain is Cytoplasmic. A helical; Signal-anchor for type II membrane protein transmembrane segment spans residues 7–27 (ILNTLLTLCILGLVAGGMLYF). The Periplasmic portion of the chain corresponds to 28–853 (HLKSELQQPM…TPATQPQELF (826 aa)). Residues 37 to 205 (MQIYTADGKL…STMNPLYSLK (169 aa)) form a transglycosylase region. Catalysis depends on E75, which acts as the Proton donor; for transglycosylase activity. Positions 387 to 681 (QRANGEWQLG…RVISGELAFL (295 aa)) are transpeptidase. S441 serves as the catalytic Acyl-ester intermediate; for transpeptidase activity. A disordered region spans residues 615–636 (NALKPTDDSTNGEELDQQPETV).

This sequence in the N-terminal section; belongs to the glycosyltransferase 51 family. The protein in the C-terminal section; belongs to the transpeptidase family.

It localises to the cell inner membrane. It catalyses the reaction [GlcNAc-(1-&gt;4)-Mur2Ac(oyl-L-Ala-gamma-D-Glu-L-Lys-D-Ala-D-Ala)](n)-di-trans,octa-cis-undecaprenyl diphosphate + beta-D-GlcNAc-(1-&gt;4)-Mur2Ac(oyl-L-Ala-gamma-D-Glu-L-Lys-D-Ala-D-Ala)-di-trans,octa-cis-undecaprenyl diphosphate = [GlcNAc-(1-&gt;4)-Mur2Ac(oyl-L-Ala-gamma-D-Glu-L-Lys-D-Ala-D-Ala)](n+1)-di-trans,octa-cis-undecaprenyl diphosphate + di-trans,octa-cis-undecaprenyl diphosphate + H(+). The enzyme catalyses Preferential cleavage: (Ac)2-L-Lys-D-Ala-|-D-Ala. Also transpeptidation of peptidyl-alanyl moieties that are N-acyl substituents of D-alanine.. It functions in the pathway cell wall biogenesis; peptidoglycan biosynthesis. Functionally, cell wall formation. Synthesis of cross-linked peptidoglycan from the lipid intermediates. The enzyme has a penicillin-insensitive transglycosylase N-terminal domain (formation of linear glycan strands) and a penicillin-sensitive transpeptidase C-terminal domain (cross-linking of the peptide subunits). The chain is Penicillin-binding protein 1A (mrcA) from Haemophilus influenzae (strain ATCC 51907 / DSM 11121 / KW20 / Rd).